The following is a 243-amino-acid chain: Phosphate-specific transport system accessory protein PhoU (243 aa).

Belongs to the PhoU family. Homodimer.

Its subcellular location is the cytoplasm. Functionally, part of the phosphate (Pho) regulon, which plays a key role in phosphate homeostasis. Encoded together with proteins of the phosphate-specific transport (Pst) system in the polycistronic pstSCAB-phoU operon. PhoU is essential for the repression of the Pho regulon at high phosphate conditions. In this role, it may bind, possibly as a chaperone, to PhoR, PhoB or a PhoR-PhoB complex to promote dephosphorylation of phospho-PhoB, or inhibit formation of the PhoR-PhoB transitory complex. This is Phosphate-specific transport system accessory protein PhoU from Serratia marcescens.